The primary structure comprises 834 residues: Semaphorin-4C (834 aa).

The signal sequence occupies residues 1 to 20 (MAPHWAVWLLAAGLWGLGIG). Residues 21 to 664 (AEMWWNLVPR…EARAPLENLG (644 aa)) lie on the Extracellular side of the membrane. The Sema domain maps to 30-497 (RKTVSSGELV…SRSQLVQLSL (468 aa)). The dominant negative effect on myogenic differentiation stretch occupies residues 46 to 489 (SQTGIQDFLT…SKKVLFAGSR (444 aa)). A disulfide bridge links Cys99 with Cys110. N-linked (GlcNAc...) asparagine glycans are attached at residues Asn106 and Asn121. 3 disulfides stabilise this stretch: Cys128/Cys137, Cys261/Cys370, and Cys285/Cys330. N-linked (GlcNAc...) asparagine glycosylation is found at Asn310 and Asn419. Positions 499–552 (DCTKYRFCVDCVLARDPYCAWNVNTSRCVATTSGRSGSFLVQHVANLDTSKMCN) constitute a PSI domain. Intrachain disulfides connect Cys500–Cys517 and Cys509–Cys526. Asn522 and Asn565 each carry an N-linked (GlcNAc...) asparagine glycan. An Ig-like C2-type domain is found at 557–645 (KKVRSIPKNI…RLAAESYLVA (89 aa)). A disulfide bridge connects residues Cys578 and Cys628. Residues 665-685 (LVWLAVVALGAVCLVLLLLVL) traverse the membrane as a helical segment. Residues 686 to 834 (SLRRRLREEL…PDSNPEESSV (149 aa)) are Cytoplasmic-facing. Ser743 is subject to Phosphoserine. Positions 749–834 (GHARCQPGGG…PDSNPEESSV (86 aa)) are disordered. A compositionally biased stretch (pro residues) spans 757-773 (GGPPSPPPGIPGQPLPS). Residues 831–834 (ESSV) carry the PDZ-binding motif.

It belongs to the semaphorin family. Interacts (via the PDZ-binding motif) with GIPC (via the PDZ domain). Interacts with NCDN. Interacts (via the PDZ-binding motif) with DLG4. Interacts with PLXNB2. As to expression, predominantly expressed in brain (at protein level).

It is found in the postsynaptic density membrane. The protein localises to the cytoplasmic vesicle. Its subcellular location is the secretory vesicle. The protein resides in the synaptic vesicle membrane. In terms of biological role, cell surface receptor for PLXNB2 that plays an important role in cell-cell signaling. PLXNB2 binding promotes downstream activation of RHOA and phosphorylation of ERBB2 at 'Tyr-1248'. Required for normal brain development, axon guidance and cell migration. Probable signaling receptor which may play a role in myogenic differentiation through activation of the stress-activated MAPK cascade. In Mus musculus (Mouse), this protein is Semaphorin-4C (Sema4c).